A 278-amino-acid polypeptide reads, in one-letter code: Fe(II)/2-oxoglutarate-dependent dioxygenase nvfI (278 aa).

Belongs to the asaB hydroxylase/desaturase family.

The enzyme catalyses asnovolin A + 2-oxoglutarate + 2 O2 = fumigatonoid A + succinate + CO2. Its pathway is secondary metabolite biosynthesis; terpenoid biosynthesis. Its function is as follows. Fe(II)/2-oxoglutarate-dependent dioxygenase; part of the gene cluster that mediates the biosynthesis of novofumigatonin, a heavily oxygenated meroterpenoid containing a unique orthoester moiety. The first step of the pathway is the synthesis of 3,5-dimethylorsellinic acid (DMOA) by the polyketide synthase nvfA via condensation of one acetyl-CoA starter unit with 3 malonyl-CoA units and 2 methylations. DMOA is then converted to farnesyl-DMOA by the farnesyltransferase nvfB. Epoxydation by FAD-dependent monooxygenase nvfK, followed by a protonation-initiated cyclization catalyzed by the terpene cyclase nvfL leads to the production of asnavolin H. The short chain dehydrogenase nvfC then as a 3-OH dehydrogenase of asnovolin H to yield chemesin D. There are two branches to synthesize asnovolin A from chemesin D. In one branch, chemesin D undergoes Baeyer-Villiger oxidation by nvfH, methylation by nvfJ, and enoyl reduction by the nvfM D enoylreductase that reduces the double bond between C-5'and C-6', to form respectively asnovolin I, asnovolin K, and asnovolin A. In the other branch, the methylation precedes the Baeyer-Villiger oxidation and the enoyl reduction to yield asnovolin A via the asnovolin J intermediate. Asnovolin A is further converted to fumigatonoid A by the Fe(II)/2-oxoglutarate-dependent dioxygenase nvfI that catalyzes an endoperoxidation reaction. The alpha/beta hydrolase nvfD then acts as an epimerase that converts fumigatonoid A to its C-5' epimer, which then undergoes spontaneous or nvfD-catalyzed lactonization. The following step utilizes the ketoreductase nvfG to produce fumigatonoid B. The dioxygenase nvfE further converts fumigatonoid B into fumigatonoid C. Finally the Fe(II)/2-oxoglutarate-dependent dioxygenase nvfF catalyzes two rounds of oxidation to transform fumigatonoid C into the end product, novofumigatonin A. The polypeptide is Fe(II)/2-oxoglutarate-dependent dioxygenase nvfI (Aspergillus novofumigatus (strain IBT 16806)).